A 245-amino-acid chain; its full sequence is MLILLPPSETKTPGGAGAPLDLPSLSFPELTDVRESIITDLGALSPDDALPVLGISEKLRPEAVANTVLRSAPTMPAVLRYSGVLYDALAADTLTPAALNRLAIGSALFGVVRAGDHIPHYRLSGGTKLPGAQGTTPTMKARWGTTITDALAGVDELIIDLRSGTYQQLGKVPGAVTVRVESVLGDGTRKVVSHFNKHYKGELARVLATSPREATTAGEVADIARGAGMTVEINEGRKETLTLVV.

The interval M1 to L20 is disordered.

This sequence belongs to the UPF0246 family.

This chain is UPF0246 protein CE1889, found in Corynebacterium efficiens (strain DSM 44549 / YS-314 / AJ 12310 / JCM 11189 / NBRC 100395).